The primary structure comprises 111 residues: Probable 4-amino-4-deoxy-L-arabinose-phosphoundecaprenol flippase subunit ArnE (111 aa).

The Cytoplasmic portion of the chain corresponds to 1 to 35; the sequence is MIWLTLVFASLLSVAGQLCQKQATCFVAISKRRKH. Residues 36 to 56 form a helical membrane-spanning segment; sequence IVLWLGLALACLGLAMVLWLL. The region spanning 40 to 109 is the EamA domain; sequence LGLALACLGL…IIGGIVILGS (70 aa). Residues 57–60 are Periplasmic-facing; the sequence is VLQN. The chain crosses the membrane as a helical span at residues 61–81; sequence VPVGIAYPMLSLNFVWVTLAA. Over 82 to 87 the chain is Cytoplasmic; it reads VKLWHE. A helical membrane pass occupies residues 88-108; that stretch reads PVSPRHWCGVAFIIGGIVILG. Over 109-111 the chain is Periplasmic; the sequence is STV.

The protein belongs to the ArnE family. In terms of assembly, heterodimer of ArnE and ArnF.

The protein localises to the cell inner membrane. The protein operates within bacterial outer membrane biogenesis; lipopolysaccharide biosynthesis. Functionally, translocates 4-amino-4-deoxy-L-arabinose-phosphoundecaprenol (alpha-L-Ara4N-phosphoundecaprenol) from the cytoplasmic to the periplasmic side of the inner membrane. This chain is Probable 4-amino-4-deoxy-L-arabinose-phosphoundecaprenol flippase subunit ArnE, found in Escherichia coli O157:H7.